We begin with the raw amino-acid sequence, 256 residues long: Geranylgeranylglyceryl phosphate synthase (256 aa).

Asp28 and Ser53 together coordinate Mg(2+). Sn-glycerol 1-phosphate is bound by residues 172 to 178 (YLEAGSG), 203 to 204 (GG), and 225 to 226 (GT).

The protein belongs to the GGGP/HepGP synthase family. Group II subfamily. The cofactor is Mg(2+).

It is found in the cytoplasm. It catalyses the reaction sn-glycerol 1-phosphate + (2E,6E,10E)-geranylgeranyl diphosphate = sn-3-O-(geranylgeranyl)glycerol 1-phosphate + diphosphate. The protein operates within membrane lipid metabolism; glycerophospholipid metabolism. In terms of biological role, prenyltransferase that catalyzes the transfer of the geranylgeranyl moiety of geranylgeranyl diphosphate (GGPP) to the C3 hydroxyl of sn-glycerol-1-phosphate (G1P). This reaction is the first ether-bond-formation step in the biosynthesis of archaeal membrane lipids. The protein is Geranylgeranylglyceryl phosphate synthase of Methanococcus maripaludis (strain C5 / ATCC BAA-1333).